Here is a 233-residue protein sequence, read N- to C-terminus: Sugar fermentation stimulation protein homolog (233 aa).

Belongs to the SfsA family.

This is Sugar fermentation stimulation protein homolog from Acetivibrio thermocellus (strain ATCC 27405 / DSM 1237 / JCM 9322 / NBRC 103400 / NCIMB 10682 / NRRL B-4536 / VPI 7372) (Clostridium thermocellum).